Consider the following 856-residue polypeptide: DNA mismatch repair protein MutS (856 aa).

617–624 (GPNMGGKS) is an ATP binding site.

Belongs to the DNA mismatch repair MutS family.

Functionally, this protein is involved in the repair of mismatches in DNA. It is possible that it carries out the mismatch recognition step. This protein has a weak ATPase activity. This Psychromonas ingrahamii (strain DSM 17664 / CCUG 51855 / 37) protein is DNA mismatch repair protein MutS.